We begin with the raw amino-acid sequence, 203 residues long: Galactoside O-acetyltransferase (203 aa).

Substrate contacts are provided by D17, S71, N85, and D93. N85 contributes to the acetyl-CoA binding site. H115 serves as the catalytic Proton donor/acceptor. Residues S142, A160, T165–K166, R180, and R183 each bind acetyl-CoA.

Belongs to the transferase hexapeptide repeat family. As to quaternary structure, homotrimer. In terms of processing, the N-terminus of this protein is heterogeneous because the initiator methionine is only partially cleaved.

Its subcellular location is the cytoplasm. It carries out the reaction a beta-D-galactoside + acetyl-CoA = a 6-acetyl-beta-D-galactoside + CoA. In terms of biological role, catalyzes the CoA-dependent transfer of an acetyl group to the 6-O-methyl position of a range of galactosides, glucosides, and lactosides. May assist cellular detoxification by acetylating non-metabolizable pyranosides, thereby preventing their reentry into the cell. This chain is Galactoside O-acetyltransferase (lacA), found in Escherichia coli (strain K12).